A 74-amino-acid chain; its full sequence is Delta-stichotoxin-Sgt2a (74 aa).

A signal peptide spans 1–19 (MNRLIILVFAAVFLTLASA). Residues 20-28 (EVSEDVNMA) constitute a propeptide that is removed on maturation. 3 disulfides stabilise this stretch: cysteine 34–cysteine 71, cysteine 36–cysteine 64, and cysteine 57–cysteine 72.

It belongs to the sea anemone sodium channel inhibitory toxin family. Type I subfamily.

It localises to the secreted. The protein localises to the nematocyst. In terms of biological role, binds specifically to voltage-gated sodium channels (Nav), thereby delaying their inactivation during signal transduction. The protein is Delta-stichotoxin-Sgt2a of Stichodactyla gigantea (Giant carpet anemone).